We begin with the raw amino-acid sequence, 344 residues long: Anthranilate phosphoribosyltransferase (344 aa).

5-phospho-alpha-D-ribose 1-diphosphate-binding positions include Gly-86, 89–90, Thr-94, 96–99, 114–122, and Ser-126; these read GD, NIST, and KHGNKSASG. Residue Gly-86 coordinates anthranilate. Ser-98 serves as a coordination point for Mg(2+). Asn-117 contributes to the anthranilate binding site. Position 172 (Arg-172) interacts with anthranilate. Residues Asp-231 and Glu-232 each coordinate Mg(2+).

This sequence belongs to the anthranilate phosphoribosyltransferase family. Homodimer. Requires Mg(2+) as cofactor.

The enzyme catalyses N-(5-phospho-beta-D-ribosyl)anthranilate + diphosphate = 5-phospho-alpha-D-ribose 1-diphosphate + anthranilate. It participates in amino-acid biosynthesis; L-tryptophan biosynthesis; L-tryptophan from chorismate: step 2/5. Its function is as follows. Catalyzes the transfer of the phosphoribosyl group of 5-phosphorylribose-1-pyrophosphate (PRPP) to anthranilate to yield N-(5'-phosphoribosyl)-anthranilate (PRA). The sequence is that of Anthranilate phosphoribosyltransferase from Prochlorococcus marinus (strain AS9601).